Here is a 551-residue protein sequence, read N- to C-terminus: Serine beta-lactamase-like protein LACTB, mitochondrial (551 aa).

Residues 1 to 113 (MYRLLSSVTA…RAIESSRDLL (113 aa)) constitute a mitochondrion transit peptide. The tract at residues 69–101 (PADPEASGTTELSHEQALSPGSPHTPAPPAARG) is disordered. Ser-162 functions as the Acyl-ester intermediate in the catalytic mechanism. The disordered stretch occupies residues 237 to 287 (LKMVKGTPPPSDQEKELKEKGGKNNEKSDAPKAKVEQDSEARCRSAKPGKK). A compositionally biased stretch (basic and acidic residues) spans 248 to 279 (DQEKELKEKGGKNNEKSDAPKAKVEQDSEARC). N6-succinyllysine is present on residues Lys-287 and Lys-288. Lys-301 and Lys-346 each carry N6-acetyllysine.

This sequence belongs to the peptidase S12 family. In terms of tissue distribution, expressed predominantly in liver.

The protein resides in the mitochondrion. Functionally, mitochondrial serine protease that acts as a regulator of mitochondrial lipid metabolism. Acts by decreasing protein levels of PISD, a mitochondrial enzyme that converts phosphatidylserine (PtdSer) to phosphatidylethanolamine (PtdEtn), thereby affecting mitochondrial lipid metabolism. It is unclear whether it acts directly by mediating proteolysis of PISD or by mediating proteolysis of another lipid metabolism protein. Acts as a tumor suppressor that has the ability to inhibit proliferation of multiple types of cancer cells: probably by promoting decreased levels of PISD, thereby affecting mitochondrial lipid metabolism. The protein is Serine beta-lactamase-like protein LACTB, mitochondrial of Mus musculus (Mouse).